The chain runs to 564 residues: Proline--tRNA ligase (564 aa).

Belongs to the class-II aminoacyl-tRNA synthetase family. ProS type 1 subfamily. Homodimer.

It is found in the cytoplasm. The catalysed reaction is tRNA(Pro) + L-proline + ATP = L-prolyl-tRNA(Pro) + AMP + diphosphate. Functionally, catalyzes the attachment of proline to tRNA(Pro) in a two-step reaction: proline is first activated by ATP to form Pro-AMP and then transferred to the acceptor end of tRNA(Pro). As ProRS can inadvertently accommodate and process non-cognate amino acids such as alanine and cysteine, to avoid such errors it has two additional distinct editing activities against alanine. One activity is designated as 'pretransfer' editing and involves the tRNA(Pro)-independent hydrolysis of activated Ala-AMP. The other activity is designated 'posttransfer' editing and involves deacylation of mischarged Ala-tRNA(Pro). The misacylated Cys-tRNA(Pro) is not edited by ProRS. In Xylella fastidiosa (strain M12), this protein is Proline--tRNA ligase.